Reading from the N-terminus, the 452-residue chain is Ketoisovalerate reductase BEA2 (452 aa).

G70–G75 serves as a coordination point for NADP(+). K285 functions as the Proton donor in the catalytic mechanism. Positions 289, 293, and 393 each coordinate substrate. Residue E405 participates in NADP(+) binding.

The protein belongs to the ketopantoate reductase family.

It carries out the reaction (R)-2-hydroxy-3-methylbutanoate + NADP(+) = 3-methyl-2-oxobutanoate + NADPH + H(+). Its function is as follows. Ketoisovalerate reductase; part of the gene cluster that mediates the biosynthesis of beauvericin (BEA), a non-ribosomal cyclic hexadepsipeptide that shows antibiotic, antifungal, insecticidal, and cancer cell antiproliferative and antihaptotactic activity. Ketoisovalerate reductase BEA2 catalyzes the NADPH-specific reduction of ketoisovaleric acid to hydroxyisovalerate, a precursor for beauvericin biosynthesis. The nonribosomal cyclodepsipeptide synthetase BEA1 then catalyzes the formation of beauvericin via condensation and cyclization of 3 dipeptidol monomers, each composed of one unit of hydroxyisovalerate and one unit of N-methyl-phenylalanine. In Gibberella fujikuroi (strain CBS 195.34 / IMI 58289 / NRRL A-6831) (Bakanae and foot rot disease fungus), this protein is Ketoisovalerate reductase BEA2.